Consider the following 175-residue polypeptide: uncharacterized protein (175 aa).

Positions 1-33 (MERLPYEIVSTIFRKAILHYVLIRGTTYPQSLA) are cleaved as a signal peptide.

This is an uncharacterized protein from Methanocaldococcus jannaschii (strain ATCC 43067 / DSM 2661 / JAL-1 / JCM 10045 / NBRC 100440) (Methanococcus jannaschii).